A 453-amino-acid polypeptide reads, in one-letter code: Protein LOW PSII ACCUMULATION 1, chloroplastic (453 aa).

Residues 1–92 (MAVATAPSLN…LDLFKRGRVK (92 aa)) constitute a chloroplast transit peptide. TPR repeat units follow at residues 75 to 108 (AELC…APNP) and 112 to 145 (QAAY…YNLK). The next 2 helical transmembrane spans lie at 202–222 (FFYF…VPRL) and 238–258 (TTGN…LFLW).

Interacts with psbA, but not with psbD, petB, ALB3, LPA2 or LPA3. Is not a component of the PSII complex.

The protein resides in the plastid. The protein localises to the chloroplast thylakoid membrane. Chaperone required for efficient photosystem II (PSII) assembly. Binds to psbA during de novo biogenesis of PSII. The polypeptide is Protein LOW PSII ACCUMULATION 1, chloroplastic (LPA1) (Arabidopsis thaliana (Mouse-ear cress)).